The sequence spans 749 residues: Polyribonucleotide nucleotidyltransferase (749 aa).

Mg(2+) is bound by residues Asp-487 and Asp-493. Residues 554–613 (PSTTTIKIDKDKIRDIIGPGGKIIKEICETSGAKIDISDDGTVSVYASDRDKLKVALDKI) form the KH domain. The S1 motif domain maps to 623–691 (GEIFNGTVVK…NKGKAKLTIK (69 aa)). Residues 691–749 (KNADKDKSSNNTKPKTNVNNTNKDNSEPEQRRDSSKKRAWNEDNNAETAEVITERKYFN) form a disordered region. Positions 699-713 (SNNTKPKTNVNNTNK) are enriched in low complexity. Residues 714–723 (DNSEPEQRRD) show a composition bias toward basic and acidic residues.

The protein belongs to the polyribonucleotide nucleotidyltransferase family. Requires Mg(2+) as cofactor.

It is found in the cytoplasm. The catalysed reaction is RNA(n+1) + phosphate = RNA(n) + a ribonucleoside 5'-diphosphate. Functionally, involved in mRNA degradation. Catalyzes the phosphorolysis of single-stranded polyribonucleotides processively in the 3'- to 5'-direction. The chain is Polyribonucleotide nucleotidyltransferase from Rickettsia conorii (strain ATCC VR-613 / Malish 7).